Consider the following 175-residue polypeptide: Alkyl hydroperoxide reductase AhpD (175 aa).

Residue cysteine 131 is the Proton donor of the active site. Residues cysteine 131 and cysteine 134 are joined by a disulfide bond. The active-site Cysteine sulfenic acid (-SOH) intermediate is cysteine 134.

The protein belongs to the AhpD family.

The catalysed reaction is N(6)-[(R)-dihydrolipoyl]-L-lysyl-[lipoyl-carrier protein] + a hydroperoxide = N(6)-[(R)-lipoyl]-L-lysyl-[lipoyl-carrier protein] + an alcohol + H2O. Functionally, antioxidant protein with alkyl hydroperoxidase activity. Required for the reduction of the AhpC active site cysteine residues and for the regeneration of the AhpC enzyme activity. The polypeptide is Alkyl hydroperoxide reductase AhpD (Brucella anthropi (strain ATCC 49188 / DSM 6882 / CCUG 24695 / JCM 21032 / LMG 3331 / NBRC 15819 / NCTC 12168 / Alc 37) (Ochrobactrum anthropi)).